The primary structure comprises 783 residues: Endonuclease MutS2 (783 aa).

ATP is bound at residue 333–340; it reads GPNTGGKT. The region spanning 708-783 is the Smr domain; that stretch reads IDLRGKNIEE…GLGATFIYLK (76 aa).

The protein belongs to the DNA mismatch repair MutS family. MutS2 subfamily. Homodimer. Binds to stalled ribosomes, contacting rRNA.

In terms of biological role, endonuclease that is involved in the suppression of homologous recombination and thus may have a key role in the control of bacterial genetic diversity. Functionally, acts as a ribosome collision sensor, splitting the ribosome into its 2 subunits. Detects stalled/collided 70S ribosomes which it binds and splits by an ATP-hydrolysis driven conformational change. Acts upstream of the ribosome quality control system (RQC), a ribosome-associated complex that mediates the extraction of incompletely synthesized nascent chains from stalled ribosomes and their subsequent degradation. Probably generates substrates for RQC. The protein is Endonuclease MutS2 of Finegoldia magna (strain ATCC 29328 / DSM 20472 / WAL 2508) (Peptostreptococcus magnus).